The sequence spans 442 residues: Chromosomal replication initiator protein DnaA (442 aa).

The segment at 1-75 is domain I, interacts with DnaA modulators; it reads MDAWPRCLER…GNGEVALAVG (75 aa). The segment at 75-104 is domain II; the sequence is GSRPRAPEPAPAPVAATIAPQAAPIAPFAG. The tract at residues 105–322 is domain III, AAA+ region; that stretch reads NLDSHYTFAN…GALNTLVARA (218 aa). Gly150, Gly152, Lys153, and Thr154 together coordinate ATP. The tract at residues 323–442 is domain IV, binds dsDNA; that stretch reads NFTGRSITVE…WEKLIRKLSE (120 aa).

It belongs to the DnaA family. Oligomerizes as a right-handed, spiral filament on DNA at oriC.

It is found in the cytoplasm. Its function is as follows. Plays an essential role in the initiation and regulation of chromosomal replication. ATP-DnaA binds to the origin of replication (oriC) to initiate formation of the DNA replication initiation complex once per cell cycle. Binds the DnaA box (a 9 base pair repeat at the origin) and separates the double-stranded (ds)DNA. Forms a right-handed helical filament on oriC DNA; dsDNA binds to the exterior of the filament while single-stranded (ss)DNA is stabiized in the filament's interior. The ATP-DnaA-oriC complex binds and stabilizes one strand of the AT-rich DNA unwinding element (DUE), permitting loading of DNA polymerase. After initiation quickly degrades to an ADP-DnaA complex that is not apt for DNA replication. Binds acidic phospholipids. The polypeptide is Chromosomal replication initiator protein DnaA (Xanthomonas oryzae pv. oryzae (strain PXO99A)).